We begin with the raw amino-acid sequence, 293 residues long: Nucleotide-binding protein DvMF_0424 (293 aa).

ATP is bound at residue 13–20 (GLSGAGKS). Position 65 to 68 (65 to 68 (DLRE)) interacts with GTP.

This sequence belongs to the RapZ-like family.

In terms of biological role, displays ATPase and GTPase activities. The sequence is that of Nucleotide-binding protein DvMF_0424 from Nitratidesulfovibrio vulgaris (strain DSM 19637 / Miyazaki F) (Desulfovibrio vulgaris).